The sequence spans 373 residues: Acyl-CoA dehydrogenase FadE27 (373 aa).

3 residues coordinate FAD: R251, H327, and G331.

The protein belongs to the acyl-CoA dehydrogenase family. As to quaternary structure, heterotetramer (dimer of heterodimers) composed of FadE26 and FadE27. The cofactor is FAD.

The catalysed reaction is (25S)-3-oxocholest-4-en-26-oyl-CoA + A = 3-oxo-cholest-4,24-dien-26-oyl-CoA + AH2. It functions in the pathway steroid metabolism; cholesterol degradation. With respect to regulation, uncompetitively inhibited by high concentration of 3-OCS-CoA. Functionally, involved in the first cycle of side chain dehydrogenation in the beta-oxidation of cholesterol catabolism. It contributes partly to the virulence by increasing the efficiency of beta-oxidation. Catalyzes the dehydrogenation of acyl-CoA ester side chains of (25S)-3-oxo-cholest-4-en-26-oyl-CoA (3-OCS-CoA) to yield (24E)-3-oxo-cholest-4,24-dien-26-oyl-CoA. Also able to dehydrogenate steroyl-CoA such as 3-oxo-chol-4-en-24-oyl-CoA (3-OCO-CoA) as well as 3-oxo-4-pregnene-20-carboxyl-CoA (3-OPC-CoA). It dehydrogenates only (25S)-OCS-CoA diastereomer. This chain is Acyl-CoA dehydrogenase FadE27 (fadE27), found in Mycobacterium tuberculosis (strain ATCC 25618 / H37Rv).